The primary structure comprises 221 residues: Adenylate kinase (221 aa).

10–15 (GAGKGT) serves as a coordination point for ATP. The interval 30 to 59 (STGDMLRAAVKAGTEFGVAAKKIMDAGGLV) is NMP. AMP is bound by residues Thr-31, Arg-36, 57 to 59 (GLV), 85 to 88 (GFPR), and Gln-92. Residues 122–159 (GRRVHPASGRTYHIKYNPPKVEGKDDVTGDALIQRDDD) are LID. ATP is bound by residues Arg-123 and 132 to 133 (TY). AMP-binding residues include Arg-156 and Arg-167. Gly-207 is a binding site for ATP.

This sequence belongs to the adenylate kinase family. Monomer.

It localises to the cytoplasm. The catalysed reaction is AMP + ATP = 2 ADP. It functions in the pathway purine metabolism; AMP biosynthesis via salvage pathway; AMP from ADP: step 1/1. In terms of biological role, catalyzes the reversible transfer of the terminal phosphate group between ATP and AMP. Plays an important role in cellular energy homeostasis and in adenine nucleotide metabolism. This is Adenylate kinase from Polynucleobacter asymbioticus (strain DSM 18221 / CIP 109841 / QLW-P1DMWA-1) (Polynucleobacter necessarius subsp. asymbioticus).